A 257-amino-acid chain; its full sequence is MEILQFIGYGNMAQAILEGAHEILSKRFILEITGRNPEKIAPFLQEKNIQAQIVPYKDAIDIHQKFVFLLFKPYNLKDFNYQGQAKSVLSALAGVGFKALSDAIDSLHYLKCMPNIASKFALSSTAVCEKSPMPLISQKALSVIESFGNCVRVGHEELVDASVATNGSALAFLSLVANSLKDAGIREGLNARGSLELVKMSFKGFAKLLEKERPEMIIEQICTPKGATIEGLSVLEKKGVRGAFIEACHKSVKKMRL.

It belongs to the pyrroline-5-carboxylate reductase family.

It localises to the cytoplasm. It catalyses the reaction L-proline + NADP(+) = (S)-1-pyrroline-5-carboxylate + NADPH + 2 H(+). It carries out the reaction L-proline + NAD(+) = (S)-1-pyrroline-5-carboxylate + NADH + 2 H(+). It participates in amino-acid biosynthesis; L-proline biosynthesis; L-proline from L-glutamate 5-semialdehyde: step 1/1. Its function is as follows. Catalyzes the reduction of 1-pyrroline-5-carboxylate (PCA) to L-proline. This chain is Pyrroline-5-carboxylate reductase, found in Helicobacter pylori (strain ATCC 700392 / 26695) (Campylobacter pylori).